The primary structure comprises 735 residues: Receptor-type guanylate cyclase gcy-27 (735 aa).

Asparagine 11 carries N-linked (GlcNAc...) asparagine glycosylation. The helical transmembrane segment at 28 to 48 (FIICTLPVPIYFVVVAIWTIN) threads the bilayer. A Protein kinase domain is found at 188–465 (ALTSRRRVFG…IENLRNAIAI (278 aa)). Positions 538–668 (TVMFVQICDF…DTVNFASRMQ (131 aa)) constitute a Guanylate cyclase domain.

This sequence belongs to the adenylyl cyclase class-4/guanylyl cyclase family. As to expression, expressed bilaterally in ASK, ASI and ASJ sensory neurons.

The protein localises to the cell membrane. The enzyme catalyses GTP = 3',5'-cyclic GMP + diphosphate. In terms of biological role, guanylate cyclase involved in the production of the second messenger cGMP. May be involved in sensitivity to quinine by regulating egl-4 activity through the production of cGMP. Promotes the calcium flux to the cytoplasm in ASJ sensory neurons upon removal of a nitric oxide (NO) stimulus and is thereby involved in the behavioral avoidance response to NO-producing organisms like P.aeruginosa. The sequence is that of Receptor-type guanylate cyclase gcy-27 from Caenorhabditis elegans.